Here is a 358-residue protein sequence, read N- to C-terminus: Heme A synthase (358 aa).

Transmembrane regions (helical) follow at residues 22–42 (IQVW…VGGA), 107–127 (VLGR…WATK), 133–153 (ILFP…IGWW), 172–192 (LAFH…LSRG), 208–228 (FAAW…LVAG), 269–289 (FIHR…AFYV), 302–322 (AFLI…TLLH), and 324–344 (VPIS…CFAV). Residue His271 coordinates heme. A heme-binding site is contributed by His332.

Belongs to the COX15/CtaA family. Type 2 subfamily. As to quaternary structure, interacts with CtaB. Heme b serves as cofactor.

Its subcellular location is the cell membrane. It carries out the reaction Fe(II)-heme o + 2 A + H2O = Fe(II)-heme a + 2 AH2. Its pathway is porphyrin-containing compound metabolism; heme A biosynthesis; heme A from heme O: step 1/1. Catalyzes the conversion of heme O to heme A by two successive hydroxylations of the methyl group at C8. The first hydroxylation forms heme I, the second hydroxylation results in an unstable dihydroxymethyl group, which spontaneously dehydrates, resulting in the formyl group of heme A. The sequence is that of Heme A synthase from Bartonella tribocorum (strain CIP 105476 / IBS 506).